The following is a 215-amino-acid chain: Outer membrane protein assembly factor BamC homolog (215 aa).

A signal peptide spans 1-16 (MKKIILNLVTAIILAG). Cys17 is lipidated: N-palmitoyl cysteine. Cys17 carries S-diacylglycerol cysteine lipidation.

This sequence belongs to the BamC family.

Its subcellular location is the cell outer membrane. The polypeptide is Outer membrane protein assembly factor BamC homolog (Haemophilus influenzae (strain ATCC 51907 / DSM 11121 / KW20 / Rd)).